We begin with the raw amino-acid sequence, 339 residues long: Uroporphyrinogen decarboxylase (339 aa).

Substrate-binding positions include 21–25 (RQAGR), Phe-40, Asp-71, Tyr-147, Ser-202, and His-315.

This sequence belongs to the uroporphyrinogen decarboxylase family. Homodimer.

The protein localises to the cytoplasm. The catalysed reaction is uroporphyrinogen III + 4 H(+) = coproporphyrinogen III + 4 CO2. It participates in porphyrin-containing compound metabolism; protoporphyrin-IX biosynthesis; coproporphyrinogen-III from 5-aminolevulinate: step 4/4. Its function is as follows. Catalyzes the decarboxylation of four acetate groups of uroporphyrinogen-III to yield coproporphyrinogen-III. This is Uroporphyrinogen decarboxylase from Helicobacter pylori (strain ATCC 700392 / 26695) (Campylobacter pylori).